The primary structure comprises 152 residues: MGFYISSLLICVFLGIVRFASAGTYSSSYEAHRNYLLNIFHNPFVNDSIKERNIPELIAFYHRYPTEVPLSDEDRQQFERFIHDYREYRRVLIDGVPPQGGSFGNIFGHFLGRVGTRYILSLFNKQREEGLSNQATNSTIPPLRIQYLTKLS.

An N-terminal signal peptide occupies residues 1–22; sequence MGFYISSLLICVFLGIVRFASA.

This sequence belongs to the Turandot family.

It localises to the secreted. A humoral factor that may play a role in stress tolerance. The chain is Protein Turandot X from Drosophila erecta (Fruit fly).